The sequence spans 1217 residues: DNA-directed RNA polymerase subunit beta' (1217 aa).

The Zn(2+) site is built by cysteine 60, cysteine 62, cysteine 75, and cysteine 78. Mg(2+)-binding residues include aspartate 449, aspartate 451, and aspartate 453. Zn(2+) is bound by residues cysteine 821, cysteine 895, cysteine 902, and cysteine 905.

It belongs to the RNA polymerase beta' chain family. In terms of assembly, the RNAP catalytic core consists of 2 alpha, 1 beta, 1 beta' and 1 omega subunit. When a sigma factor is associated with the core the holoenzyme is formed, which can initiate transcription. It depends on Mg(2+) as a cofactor. Zn(2+) serves as cofactor.

It catalyses the reaction RNA(n) + a ribonucleoside 5'-triphosphate = RNA(n+1) + diphosphate. DNA-dependent RNA polymerase catalyzes the transcription of DNA into RNA using the four ribonucleoside triphosphates as substrates. This is DNA-directed RNA polymerase subunit beta' from Lactobacillus helveticus (strain DPC 4571).